The sequence spans 460 residues: Putative 2,3-dihydroxypropane-1-sulfonate exporter (460 aa).

Over 1 to 18 (MSQTSSNPATLRLPFKEK) the chain is Cytoplasmic. A helical membrane pass occupies residues 19 to 39 (LAYGLGDLGSNILLDIGTLYL). Over 40–46 (LKFYTDV) the chain is Periplasmic. The chain crosses the membrane as a helical span at residues 47 to 67 (LGLPGTYGGIIFLIAKFFTAF). Topologically, residues 68 to 91 (TDMGTGIMLDSRRKIGPKGKFRPF) are cytoplasmic. A helical membrane pass occupies residues 92-112 (VLYAAFPVTLLAIANFVGTPF). At 113–122 (EVTGKTVVAT) the chain is on the periplasmic side. A helical membrane pass occupies residues 123 to 143 (MLFMLYGLVFSMMNCSYGAMV). The Cytoplasmic segment spans residues 144 to 161 (PAITKNPDERASLAAWRQ). A helical transmembrane segment spans residues 162-182 (GGATLGLLLCTVGFVPVMNLI). The Periplasmic portion of the chain corresponds to 183–190 (EGNAQLSY). The helical transmembrane segment at 191-211 (IFAATLFSLFGLLFMWLCYAG) threads the bilayer. At 212–242 (VKERYVEVKPVDSAQKPGLLQSFRAIAGNRP) the chain is on the cytoplasmic side. A helical membrane pass occupies residues 243 to 263 (LFILCIANLCTLGAFNVKLAI). Residues 264–275 (QVYYTQYVLNDP) are Periplasmic-facing. The helical transmembrane segment at 276–296 (ILLSWMGFFSMGCIFIGVFLM) threads the bilayer. Residues 297–307 (PGAVRRFGKKK) lie on the Cytoplasmic side of the membrane. Residues 308–328 (VYIGGLLIWVAGDLLNYFFGG) form a helical membrane-spanning segment. Position 329 (glycine 329) is a topological domain, periplasmic. A helical membrane pass occupies residues 330–350 (SVSFVAFSCLAFFGSAFVNSL). The Cytoplasmic portion of the chain corresponds to 351 to 386 (NWALVSDTVEYGEWRTGVRSEGTVYTGFTFFRKVSQ). The chain crosses the membrane as a helical span at residues 387–407 (ALAGFFPGWMLTQIGYIPNVV). At 408–418 (QSAGTVEGLRQ) the chain is on the periplasmic side. A helical transmembrane segment spans residues 419–439 (LIFIYPCVLAVITIIAMGCFY). Over 440–460 (NLNEKMYVRIVEEIEARKHTV) the chain is Cytoplasmic.

This sequence belongs to the sodium:galactoside symporter (TC 2.A.2) family.

Its subcellular location is the cell inner membrane. Its function is as follows. Could be involved in the export of 2,3-dihydroxypropane-1-sulfonate (DHPS). The chain is Putative 2,3-dihydroxypropane-1-sulfonate exporter (yihP) from Salmonella typhimurium (strain LT2 / SGSC1412 / ATCC 700720).